The primary structure comprises 128 residues: LIM domain-containing protein 2 (128 aa).

The residue at position 1 (methionine 1) is an N-acetylmethionine. A disordered region spans residues 1–25 (MFQAAGAAQATPSHEAKGGGSSSTV). One can recognise an LIM zinc-binding domain in the interval 39 to 99 (ETCAACQKTV…KPHFQQLFKS (61 aa)). Residues cysteine 41, cysteine 44, histidine 62, cysteine 65, cysteine 68, cysteine 71, cysteine 89, and histidine 92 each coordinate Zn(2+).

In terms of assembly, interacts with ILK.

It is found in the cytoplasm. It localises to the nucleus. In terms of biological role, acts as an activator of the protein-kinase ILK, thereby regulating cell motility. The chain is LIM domain-containing protein 2 (LIMD2) from Bos taurus (Bovine).